The chain runs to 478 residues: MKSYQGLADKWIKGSGEEYLDINPADKDHVLAKIRLYTKDDVKEAINKAVAKFDEWSRTPAPKRGSILLKAGELMEQEAQEFALLMTLEEGKTLKDSMFEVTRSYNLLKFYGALAFKISGKTLPSADPNTRIFTVKEPLGVVALITPWNFPLSIPVWKLAPALAAGNTAVIKPATKTPLMVAKLVEVLSKAGLPEGVVNLVVGKGSEVGDTIVSDDNIAAVSFTGSTEVGKRIYKLVGNKNRMTRIQLELGGKNALYVDKSADLTLAAELAVRGGFGLTGQSCTATSRLIINKDVYTQFKQRLLERVKKWRVGPGTEDVDMGPVVDEGQFKKDLEYIEYGKNVGAKLIYGGNIIPGKGYFLEPTIFEGVTSDMRLFKEEIFGPVLSVTEAKDLDEAIRLVNAVDYGHTAGIVASDIKAINEFVSRVEAGVIKVNKPTVGLELQAPFGGFKNSGATTWKEMGEDALEFYLKEKTVYEGW.

Residues 148–149 (WN), 172–175 (KPAT), and 225–226 (GS) each bind NADP(+). The Proton acceptor role is filled by glutamate 249. Catalysis depends on cysteine 283, which acts as the Nucleophile. Position 379 (glutamate 379) interacts with NADP(+).

The protein belongs to the aldehyde dehydrogenase family. In terms of assembly, homotetramer.

The enzyme catalyses 2,5-dioxopentanoate + NADP(+) + H2O = 2-oxoglutarate + NADPH + 2 H(+). Functionally, 2,5-dioxopentanoate dehydrogenase involved in the degradation of pentoses such as D-arabinose or D-xylose, a major component of hemicelluloses such as xylan. Catalyzes the fifth reaction in the pentose utilization pathway through dehydratation of 2,5-dioxopentanoate into 2-oxoglutarate. Also shows dehydrogenase activity toward glycolaldehyde and DL-glyceraldehyde. This is 2,5-dioxopentanoate dehydrogenase from Saccharolobus solfataricus (strain ATCC 35092 / DSM 1617 / JCM 11322 / P2) (Sulfolobus solfataricus).